The chain runs to 473 residues: 3-isopropylmalate dehydratase large subunit (473 aa).

[4Fe-4S] cluster is bound by residues cysteine 351, cysteine 414, and cysteine 417.

Belongs to the aconitase/IPM isomerase family. LeuC type 1 subfamily. Heterodimer of LeuC and LeuD. It depends on [4Fe-4S] cluster as a cofactor.

It catalyses the reaction (2R,3S)-3-isopropylmalate = (2S)-2-isopropylmalate. It participates in amino-acid biosynthesis; L-leucine biosynthesis; L-leucine from 3-methyl-2-oxobutanoate: step 2/4. Its function is as follows. Catalyzes the isomerization between 2-isopropylmalate and 3-isopropylmalate, via the formation of 2-isopropylmaleate. This chain is 3-isopropylmalate dehydratase large subunit, found in Variovorax paradoxus (strain S110).